The following is a 366-amino-acid chain: Glutamate 5-kinase (366 aa).

Residue K17 coordinates ATP. S57, D144, and N156 together coordinate substrate. ATP is bound by residues 176–177 (SD) and 216–222 (TGGMASK). Residues 278–352 (RGALVLDDGA…GRSTTELPDT (75 aa)) enclose the PUA domain.

Belongs to the glutamate 5-kinase family.

The protein resides in the cytoplasm. It catalyses the reaction L-glutamate + ATP = L-glutamyl 5-phosphate + ADP. Its pathway is amino-acid biosynthesis; L-proline biosynthesis; L-glutamate 5-semialdehyde from L-glutamate: step 1/2. In terms of biological role, catalyzes the transfer of a phosphate group to glutamate to form L-glutamate 5-phosphate. The polypeptide is Glutamate 5-kinase (Nocardia farcinica (strain IFM 10152)).